The chain runs to 985 residues: Alpha-glucosidase (985 aa).

An N-terminal signal peptide occupies residues 1 to 25 (MAGLKSFLASSWLLPVACGASQSIV). 6 N-linked (GlcNAc...) asparagine glycosylation sites follow: Asn-126, Asn-145, Asn-220, Asn-255, Asn-349, and Asn-424. Asp-492 (nucleophile) is an active-site residue. Residue Glu-495 is part of the active site. Residues Asn-508, Asn-536, Asn-539, Asn-602, and Asn-624 are each glycosylated (N-linked (GlcNAc...) asparagine). Catalysis depends on Asp-660, which acts as the Proton donor. Residues Asn-661, Asn-835, Asn-881, Asn-929, and Asn-957 are each glycosylated (N-linked (GlcNAc...) asparagine).

It belongs to the glycosyl hydrolase 31 family.

It catalyses the reaction Hydrolysis of terminal, non-reducing (1-&gt;4)-linked alpha-D-glucose residues with release of alpha-D-glucose.. Hydrolyzes malto-oligosaccharides, but has a low activity toward soluble starch. This Aspergillus oryzae (strain ATCC 42149 / RIB 40) (Yellow koji mold) protein is Alpha-glucosidase (agdA).